Reading from the N-terminus, the 342-residue chain is Large ribosomal subunit protein uL3 (342 aa).

It belongs to the universal ribosomal protein uL3 family. Part of the 50S ribosomal subunit. Forms a cluster with proteins L14 and L24e.

Its function is as follows. One of the primary rRNA binding proteins, it binds directly near the 3'-end of the 23S rRNA, where it nucleates assembly of the 50S subunit. This is Large ribosomal subunit protein uL3 from Pyrobaculum islandicum (strain DSM 4184 / JCM 9189 / GEO3).